Consider the following 375-residue polypeptide: Putative F-box protein At1g12190 (375 aa).

The region spanning 1 to 46 is the F-box domain; that stretch reads MACVKFPWELMEEILYRVPSLSLSRFKTVSKEWNTLLNDKTFIKKH.

The sequence is that of Putative F-box protein At1g12190 from Arabidopsis thaliana (Mouse-ear cress).